Consider the following 83-residue polypeptide: UPF0298 protein SERP0712 (83 aa).

It belongs to the UPF0298 family.

The protein localises to the cytoplasm. This is UPF0298 protein SERP0712 from Staphylococcus epidermidis (strain ATCC 35984 / DSM 28319 / BCRC 17069 / CCUG 31568 / BM 3577 / RP62A).